The chain runs to 225 residues: MITAITRTALPRATLRTSLATMSTIRAKHTLPPLPYAYDALEPSISAEIMNLHHTKHHQTYVNGLNAAEESLQKASADGDFKTAISLQPALKFNGGGHINHSLFWKNLAPTGSAQVKVPTSGVFYDQVQADFGGFENLKKEMNAKTAAIQGSGWGWLGYNKATKKLEIVTTPNQDPLLSHVPIIGIDIWEHAFYLQYKNVKPDYLNAIWNVINYEEAESRLKAAQ.

Residues 1–27 (MITAITRTALPRATLRTSLATMSTIRA) constitute a mitochondrion transit peptide. Mn(2+)-binding residues include H53, H101, D187, and H191.

Belongs to the iron/manganese superoxide dismutase family. Mn(2+) is required as a cofactor.

It localises to the mitochondrion. The protein resides in the cytoplasm. The catalysed reaction is 2 superoxide + 2 H(+) = H2O2 + O2. Its function is as follows. Destroys radicals which are normally produced within the cells and which are toxic to biological systems. Functionally, destroys mitochondrial radicals produced by oxidative stress. Destroys cytoplasmic radicals produced in low copper environments; a condition which inactivates the cytoplasmic copper-dependent superoxide dismutase SOD1. In Cryptococcus neoformans var. grubii serotype A (strain H99 / ATCC 208821 / CBS 10515 / FGSC 9487) (Filobasidiella neoformans var. grubii), this protein is Superoxide dismutase [Mn], mitochondrial.